Consider the following 148-residue polypeptide: Macrodomain Ter protein (148 aa).

Belongs to the MatP family. Homodimer.

It is found in the cytoplasm. Its function is as follows. Required for spatial organization of the terminus region of the chromosome (Ter macrodomain) during the cell cycle. Prevents early segregation of duplicated Ter macrodomains during cell division. Binds specifically to matS, which is a 13 bp signature motif repeated within the Ter macrodomain. The chain is Macrodomain Ter protein from Aliivibrio salmonicida (strain LFI1238) (Vibrio salmonicida (strain LFI1238)).